A 67-amino-acid polypeptide reads, in one-letter code: ATP synthase F(0) complex subunit 8 (67 aa).

The helical transmembrane segment at 8-24 threads the bilayer; the sequence is TWFTVILSMIISLFMLL. N6-acetyllysine; alternate is present on K54. Residue K54 is modified to N6-succinyllysine; alternate. Position 57 is an N6-acetyllysine (K57).

This sequence belongs to the ATPase protein 8 family. Component of the ATP synthase complex composed at least of ATP5F1A/subunit alpha, ATP5F1B/subunit beta, ATP5MC1/subunit c (homooctomer), MT-ATP6/subunit a, MT-ATP8/subunit 8, ATP5ME/subunit e, ATP5MF/subunit f, ATP5MG/subunit g, ATP5MK/subunit k, ATP5MJ/subunit j, ATP5F1C/subunit gamma, ATP5F1D/subunit delta, ATP5F1E/subunit epsilon, ATP5PF/subunit F6, ATP5PB/subunit b, ATP5PD/subunit d, ATP5PO/subunit OSCP. ATP synthase complex consists of a soluble F(1) head domain (subunits alpha(3) and beta(3)) - the catalytic core - and a membrane F(0) domain - the membrane proton channel (subunits c, a, 8, e, f, g, k and j). These two domains are linked by a central stalk (subunits gamma, delta, and epsilon) rotating inside the F1 region and a stationary peripheral stalk (subunits F6, b, d, and OSCP). Interacts with PRICKLE3.

It localises to the mitochondrion membrane. Its function is as follows. Subunit 8, of the mitochondrial membrane ATP synthase complex (F(1)F(0) ATP synthase or Complex V) that produces ATP from ADP in the presence of a proton gradient across the membrane which is generated by electron transport complexes of the respiratory chain. ATP synthase complex consist of a soluble F(1) head domain - the catalytic core - and a membrane F(1) domain - the membrane proton channel. These two domains are linked by a central stalk rotating inside the F(1) region and a stationary peripheral stalk. During catalysis, ATP synthesis in the catalytic domain of F(1) is coupled via a rotary mechanism of the central stalk subunits to proton translocation. In vivo, can only synthesize ATP although its ATP hydrolase activity can be activated artificially in vitro. Part of the complex F(0) domain. The chain is ATP synthase F(0) complex subunit 8 from Cavia porcellus (Guinea pig).